The primary structure comprises 84 residues: Small ribosomal subunit protein uS15 (84 aa).

Belongs to the universal ribosomal protein uS15 family. Part of the 30S ribosomal subunit. Forms a bridge to the 50S subunit in the 70S ribosome, contacting the 23S rRNA.

In terms of biological role, one of the primary rRNA binding proteins, it binds directly to 16S rRNA where it helps nucleate assembly of the platform of the 30S subunit by binding and bridging several RNA helices of the 16S rRNA. Functionally, forms an intersubunit bridge (bridge B4) with the 23S rRNA of the 50S subunit in the ribosome. In Fervidobacterium nodosum (strain ATCC 35602 / DSM 5306 / Rt17-B1), this protein is Small ribosomal subunit protein uS15.